The sequence spans 345 residues: RNA polymerase II holoenzyme cyclin-like subunit (345 aa).

The 92-residue stretch at 53–144 folds into the Cyclin N-terminal domain; that stretch reads QQINRLGKRM…IGECEFYLIS (92 aa). Positions 256-285 are disordered; sequence GLTPQSSSGLQAMLPPQSPAGEGPAEGNKN.

Belongs to the cyclin family. Cyclin C subfamily. Component of the srb8-11 complex, a regulatory module of the Mediator complex.

It localises to the nucleus. Component of the srb8-11 complex. The srb8-11 complex is a regulatory module of the Mediator complex which is itself involved in regulation of basal and activated RNA polymerase II-dependent transcription. The srb8-11 complex may be involved in the transcriptional repression of a subset of genes regulated by Mediator. It may inhibit the association of the Mediator complex with RNA polymerase II to form the holoenzyme complex. The srb8-11 complex phosphorylates the C-terminal domain (CTD) of the largest subunit of RNA polymerase II. The chain is RNA polymerase II holoenzyme cyclin-like subunit (ssn8) from Neurospora crassa (strain ATCC 24698 / 74-OR23-1A / CBS 708.71 / DSM 1257 / FGSC 987).